The chain runs to 238 residues: Pre-protein VI (238 aa).

A propeptide spanning residues 1–33 is cleaved from the precursor; sequence MDAVNFSILAPRYGSHPMMSAWSGIGTSDMNGG. The interval 34-54 is amphipathic alpha-helix essential for membrane lytic activity; it reads AFNWGGIWSGIKNFGSNVKNW. Positions 36 to 53 are involved in endosomal membrane lysis; sequence NWGGIWSGIKNFGSNVKN. The interaction with hexon protein stretch occupies residues 48–74; sequence GSNVKNWGSRAWNSQTGKLLRQKLNDT. Residues 67 to 76 carry the Nuclear export signal motif; it reads LRQKLNDTKV. The short motif at 153–156 is the PPXY motif element; that stretch reads PPSY. The segment at 187-212 is disordered; the sequence is TLELKPSDQPPPYSPQSSNMPVTAPV. The Nuclear export signal motif lies at 219-230; that stretch reads GTLANIVGVGLS. Residues 221–227 are interaction with hexon protein; that stretch reads LANIVGV. The segment at 228–238 is binds to importin alpha/beta, involved in hexon nuclear import; it reads GLSNVKRRRCF. The Nuclear localization signal signature appears at 233–236; it reads KRRR.

This sequence belongs to the adenoviridae protein VI family. In terms of assembly, interacts with hexon protein; this interaction allows nuclear import of hexon trimers and possibly pre-capsid assembly. Interacts (via C-terminal NLS) with importin alpha/beta. As to quaternary structure, interacts (via PPxY motif) with host NEDD4 ubiquitine ligase; this interaction might play a role in virus intracellular transport during entry. Part of a complex composed of the core-capsid bridging protein, the endosome lysis protein VI and the hexon-linking protein VIII; these interactions bridge the virus core to the capsid. Interacts with peripentonal hexons; this interaction stabilizes the capsid by gluing two peripentonal hexons together and joining them with an adjacent group-of-nine hexon. Heterodimer with the viral protease; disulfide-linked. Interacts with the viral protease. Post-translationally, ubiquitinated by Nedd4 following partial capsid disassembly; which might play a role in intracellular virus movement during entry. In terms of processing, contains the major nuclear import and export signals. Proteolytically removed during virion maturation. The processing of the C-terminus turns the precursor into a mature viral structural protein and abrogates its ability to promote hexon import and act as a potential chaperone protein.

The protein localises to the host nucleus. The protein resides in the host cytoplasm. Its subcellular location is the virion. Its function is as follows. During virus assembly, promotes hexon trimers nuclear import through nuclear pore complexes via an importin alpha/beta-dependent mechanism. By analogy to herpesviruses capsid assembly, might act as a chaperone to promote the formation of the icosahedral capsid. Functionally, structural component of the virion that provides increased stability to the particle shell through its interaction with the core-capsid bridging protein and the hexon-linking protein VIII. Fibers shedding during virus entry into host cell allows the endosome lysis protein to be exposed as a membrane-lytic peptide. Exhibits pH-independent membrane fragmentation activity and probably mediates viral rapid escape from host endosome via organellar membrane lysis. It is not clear if it then remains partially associated with the capsid and involved in the intracellular microtubule-dependent transport of capsid to the nucleus, or if it is lost during endosomal penetration. Cofactor that activates the viral protease. Binds to viral protease in a 1:1 ratio. The protein is Pre-protein VI of Canis lupus familiaris (Dog).